The primary structure comprises 158 residues: uncharacterized protein (158 aa).

The 62-residue stretch at 12–73 (LDEIDRAILR…LINPFKAGYE (62 aa)) folds into the HTH asnC-type domain. A DNA-binding region (H-T-H motif) is located at residues 31–50 (YSEISRRINVPESTVRARVN).

This is an uncharacterized protein from Pyrococcus abyssi (strain GE5 / Orsay).